The primary structure comprises 236 residues: Leucyl/phenylalanyl-tRNA--protein transferase (236 aa).

The protein belongs to the L/F-transferase family.

It is found in the cytoplasm. It catalyses the reaction N-terminal L-lysyl-[protein] + L-leucyl-tRNA(Leu) = N-terminal L-leucyl-L-lysyl-[protein] + tRNA(Leu) + H(+). It carries out the reaction N-terminal L-arginyl-[protein] + L-leucyl-tRNA(Leu) = N-terminal L-leucyl-L-arginyl-[protein] + tRNA(Leu) + H(+). The catalysed reaction is L-phenylalanyl-tRNA(Phe) + an N-terminal L-alpha-aminoacyl-[protein] = an N-terminal L-phenylalanyl-L-alpha-aminoacyl-[protein] + tRNA(Phe). Functions in the N-end rule pathway of protein degradation where it conjugates Leu, Phe and, less efficiently, Met from aminoacyl-tRNAs to the N-termini of proteins containing an N-terminal arginine or lysine. In Aliivibrio salmonicida (strain LFI1238) (Vibrio salmonicida (strain LFI1238)), this protein is Leucyl/phenylalanyl-tRNA--protein transferase.